The chain runs to 152 residues: MARMYARRRGTSSSVRPYRKEAPEWSNTDATEIEKIVVDLRKDGMSTSQIGLVLRDRYAVPDVKLATGKRIGEILREKGLESEIPEDLRNLMEKALGIRKHLAENNKDVHNKRQLQIAESKVRRLVKYYVRSGRMPKGWTYKPETAEILLTR.

Positions 1–10 (MARMYARRRG) are enriched in basic residues. The interval 1-24 (MARMYARRRGTSSSVRPYRKEAPE) is disordered.

This sequence belongs to the universal ribosomal protein uS15 family. In terms of assembly, part of the 30S ribosomal subunit.

This is Small ribosomal subunit protein uS15 from Methanoculleus marisnigri (strain ATCC 35101 / DSM 1498 / JR1).